The following is a 236-amino-acid chain: Small ribosomal subunit protein eS6 (236 aa).

2 positions are modified to phosphoserine: S232 and S233.

This sequence belongs to the eukaryotic ribosomal protein eS6 family. Phosphorylated.

In Candida glabrata (strain ATCC 2001 / BCRC 20586 / JCM 3761 / NBRC 0622 / NRRL Y-65 / CBS 138) (Yeast), this protein is Small ribosomal subunit protein eS6 (RPS6A).